The following is a 296-amino-acid chain: MKNINGIGIALVTPFNKKGEIDFISLEKIVSYVINEGVQYLVLLGTTGETPTLKLKEKIDIINCVKNISQNRIPIVLGMGSNNTEDVLLTLKLIKLDNFEAILSVCPYYNKPSQEGIYNHFKTISENTDMKIIIYNVPHRTGTNINLDTINRLINNRDNIIGIKEASGNIIQSYNFIKHKIKKDFLVFSGDDTIGLPIVLGGGDGIISVIGQAFPKELDFIYKFAYKNQVNKAYKLYYKIFKILNLVFKEGNPSGIKTLLKIKGLCNKYVRLPLLKGSKTLEKKLYIEYNNMLKTQ.

Position 47 (Thr-47) interacts with pyruvate. Tyr-135 functions as the Proton donor/acceptor in the catalytic mechanism. The Schiff-base intermediate with substrate role is filled by Lys-164. Ile-207 contributes to the pyruvate binding site.

The protein belongs to the DapA family. In terms of assembly, homotetramer; dimer of dimers.

It localises to the cytoplasm. The catalysed reaction is L-aspartate 4-semialdehyde + pyruvate = (2S,4S)-4-hydroxy-2,3,4,5-tetrahydrodipicolinate + H2O + H(+). It participates in amino-acid biosynthesis; L-lysine biosynthesis via DAP pathway; (S)-tetrahydrodipicolinate from L-aspartate: step 3/4. Functionally, catalyzes the condensation of (S)-aspartate-beta-semialdehyde [(S)-ASA] and pyruvate to 4-hydroxy-tetrahydrodipicolinate (HTPA). This Karelsulcia muelleri (strain GWSS) (Sulcia muelleri) protein is 4-hydroxy-tetrahydrodipicolinate synthase.